The primary structure comprises 386 residues: Tubulin beta-1 chain (386 aa).

GTP is bound by residues E7, S76, G80, T81, G82, N142, and N164. E7 contacts Mg(2+). The interval Y363–M386 is disordered. Residues T367–M386 show a composition bias toward acidic residues.

Belongs to the tubulin family. In terms of assembly, dimer of alpha and beta chains. A typical microtubule is a hollow water-filled tube with an outer diameter of 25 nm and an inner diameter of 15 nM. Alpha-beta heterodimers associate head-to-tail to form protofilaments running lengthwise along the microtubule wall with the beta-tubulin subunit facing the microtubule plus end conferring a structural polarity. Microtubules usually have 13 protofilaments but different protofilament numbers can be found in some organisms and specialized cells. Requires Mg(2+) as cofactor.

It localises to the cytoplasm. The protein localises to the cytoskeleton. Its function is as follows. Tubulin is the major constituent of microtubules, a cylinder consisting of laterally associated linear protofilaments composed of alpha- and beta-tubulin heterodimers. Microtubules grow by the addition of GTP-tubulin dimers to the microtubule end, where a stabilizing cap forms. Below the cap, tubulin dimers are in GDP-bound state, owing to GTPase activity of alpha-tubulin. This is Tubulin beta-1 chain (TUBB1) from Avena sativa (Oat).